The chain runs to 420 residues: uncharacterized protein (420 aa).

Disordered regions lie at residues 84-103 (RSQA…GTSE) and 122-211 (SMNN…NKKS). Polar residues predominate over residues 85–103 (SQANSESTPPEHTWSGTSE). Over residues 184-199 (SMTDQEVEQRRKEANK) the composition is skewed to basic and acidic residues. Coiled coils occupy residues 265–310 (TEKE…TATN) and 345–374 (LQFK…NFKE). A compositionally biased stretch (polar residues) spans 399-408 (KTSSPKTSIA). The segment at 399 to 420 (KTSSPKTSIAGSHRRSTRSSEN) is disordered. Residues 410-420 (SHRRSTRSSEN) show a composition bias toward basic residues.

This is an uncharacterized protein from Caenorhabditis elegans.